Consider the following 102-residue polypeptide: Monothiol glutaredoxin-S7 (102 aa).

A Glutaredoxin domain is found at 1–101 (MEKLQKMTSE…PMLKRVGALW (101 aa)). Cysteine 21 provides a ligand contact to [2Fe-2S] cluster. The Responsive for interaction with TGA factors motif lies at 99–102 (ALWL).

Belongs to the glutaredoxin family. CC-type subfamily.

The protein localises to the cytoplasm. The protein resides in the nucleus. Its function is as follows. May only reduce GSH-thiol disulfides, but not protein disulfides. The protein is Monothiol glutaredoxin-S7 (GRXS7) of Arabidopsis thaliana (Mouse-ear cress).